The chain runs to 166 residues: Large ribosomal subunit protein uL10 (166 aa).

It belongs to the universal ribosomal protein uL10 family. Part of the ribosomal stalk of the 50S ribosomal subunit. The N-terminus interacts with L11 and the large rRNA to form the base of the stalk. The C-terminus forms an elongated spine to which L12 dimers bind in a sequential fashion forming a multimeric L10(L12)X complex.

Functionally, forms part of the ribosomal stalk, playing a central role in the interaction of the ribosome with GTP-bound translation factors. The polypeptide is Large ribosomal subunit protein uL10 (Hydrogenovibrio crunogenus (strain DSM 25203 / XCL-2) (Thiomicrospira crunogena)).